The primary structure comprises 127 residues: Chondrosarcoma-associated gene 2/3 protein (127 aa).

Positions 68-127 (MSRKPRASSPLSNNHPPTPKRRGSGRHPLNPGPEALSKFPRQPGREKGPIKEVPGTKGSP) are disordered.

As to expression, weakly expressed in kidney. Expressed in various tumor cell lines including carcinomas, myeloid and lymphoid malignancies, melanomas and prostate cancer. Overexpressed in taxol-resistant breast cancer line MDA 435TR and the doxorubicin-resistant multiple myelanoma lines RPMI-8226/Dox40 and RPMI-8226/MDR10V.

Functionally, drug-resistance related protein, its expression is associated with the chemotherapy resistant and neoplastic phenotype. May also be linked to the malignant phenotype. The polypeptide is Chondrosarcoma-associated gene 2/3 protein (CSAG2) (Homo sapiens (Human)).